The primary structure comprises 307 residues: Mediator of RNA polymerase II transcription subunit 18 (307 aa).

Polar residues predominate over residues 117-126 (TNFNSTNEDQ). The tract at residues 117–162 (TNFNSTNEDQNNSKHTEDTVNESRNSDDIIDVDMDASPAPSNESCS) is disordered.

This sequence belongs to the Mediator complex subunit 18 family. Component of the Mediator complex, which is composed of at least 21 subunits that form three structurally distinct submodules. The Mediator head module contains MED6, MED8, MED11, SRB4/MED17, SRB5/MED18, ROX3/MED19, SRB2/MED20 and SRB6/MED22, the middle module contains MED1, MED4, NUT1/MED5, MED7, CSE2/MED9, NUT2/MED10, SRB7/MED21 and SOH1/MED31, and the tail module contains MED2, PGD1/MED3, RGR1/MED14, GAL11/MED15 and SIN4/MED16. The head and the middle modules interact directly with RNA polymerase II, whereas the elongated tail module interacts with gene-specific regulatory proteins. SRB5/MED18 interacts directly with MED8 and SRB2/MED20.

The protein resides in the nucleus. Component of the Mediator complex, a coactivator involved in the regulated transcription of nearly all RNA polymerase II-dependent genes. Mediator functions as a bridge to convey information from gene-specific regulatory proteins to the basal RNA polymerase II transcription machinery. The Mediator complex, having a compact conformation in its free form, is recruited to promoters by direct interactions with regulatory proteins and serves for the assembly of a functional preinitiation complex with RNA polymerase II and the general transcription factors. The Mediator complex unfolds to an extended conformation and partially surrounds RNA polymerase II, specifically interacting with the unphosphorylated form of the C-terminal domain (CTD) of RNA polymerase II. The Mediator complex dissociates from the RNA polymerase II holoenzyme and stays at the promoter when transcriptional elongation begins. This chain is Mediator of RNA polymerase II transcription subunit 18 (SRB5), found in Saccharomyces cerevisiae (strain ATCC 204508 / S288c) (Baker's yeast).